The chain runs to 107 residues: Nucleoid-associated protein mlr5504 (107 aa).

Belongs to the YbaB/EbfC family. In terms of assembly, homodimer.

It localises to the cytoplasm. The protein resides in the nucleoid. Binds to DNA and alters its conformation. May be involved in regulation of gene expression, nucleoid organization and DNA protection. The protein is Nucleoid-associated protein mlr5504 of Mesorhizobium japonicum (strain LMG 29417 / CECT 9101 / MAFF 303099) (Mesorhizobium loti (strain MAFF 303099)).